Here is a 1102-residue protein sequence, read N- to C-terminus: Putative ISWI chromatin-remodeling complex subunit YPL216W (1102 aa).

The 109-residue stretch at 23–131 folds into the WAC domain; it reads ETPWVIKESS…DTVCLKTIQK (109 aa). Positions 271–301 are disordered; it reads ELYTPLTIPPESDVEPADWKETSETSETSET. Residues 375–435 form the DDT domain; that stretch reads QFPTERLLVV…FLKTYNSKGS (61 aa). Residues 673–743 adopt a coiled-coil conformation; that stretch reads CNGIRLKLDS…EDIAFLEAKL (71 aa).

The protein resides in the nucleus. Its function is as follows. May be required for the activity of an ISWI chromatin-remodeling complex. This Saccharomyces cerevisiae (strain ATCC 204508 / S288c) (Baker's yeast) protein is Putative ISWI chromatin-remodeling complex subunit YPL216W.